Reading from the N-terminus, the 199-residue chain is Phosphatidylethanolamine N-methyltransferase (199 aa).

The Lumenal portion of the chain corresponds to 1 to 12; sequence MSWLLGYMDPTE. An intramembrane region (helical) is located at residues 13-33; sequence PSFVAAVITIVFNPLFWNVVA. Residues 34–45 are Lumenal-facing; the sequence is RWEQRTRKLSRA. A helical transmembrane segment spans residues 46–66; the sequence is FGSPHLACYSLGICILLLNIL. Over 67-93 the chain is Cytoplasmic; that stretch reads RSHCFTQAMMSQPKMEGLDNHTTYFLG. A helical membrane pass occupies residues 94–114; it reads LAFLGWGFVFVLSSFYALGFT. 98–100 serves as a coordination point for S-adenosyl-L-methionine; sequence GWG. The Lumenal segment spans residues 115–157; the sequence is GTFLGDYFGILKESRVTTFPFSVLDNPMYWGSTANYLGWALMH. Residues 158-178 form a helical membrane-spanning segment; that stretch reads ASPTGLLLTVLVAIVYVVALL. Topologically, residues 179–199 are cytoplasmic; that stretch reads YEEPFTAEIYRQKATRLHKRS. Position 180–181 (180–181) interacts with S-adenosyl-L-methionine; it reads EE.

Belongs to the class VI-like SAM-binding methyltransferase superfamily. PEMT/PEM2 methyltransferase family. In terms of tissue distribution, expressed in liver (at protein level).

The protein resides in the endoplasmic reticulum membrane. It is found in the mitochondrion membrane. It carries out the reaction a 1,2-diacyl-sn-glycero-3-phospho-N-methylethanolamine + S-adenosyl-L-methionine = a 1,2-diacyl-sn-glycero-3-phospho-N,N-dimethylethanolamine + S-adenosyl-L-homocysteine + H(+). It catalyses the reaction a 1,2-diacyl-sn-glycero-3-phospho-N,N-dimethylethanolamine + S-adenosyl-L-methionine = a 1,2-diacyl-sn-glycero-3-phosphocholine + S-adenosyl-L-homocysteine + H(+). The catalysed reaction is a 1,2-diacyl-sn-glycero-3-phosphoethanolamine + S-adenosyl-L-methionine = a 1,2-diacyl-sn-glycero-3-phospho-N-methylethanolamine + S-adenosyl-L-homocysteine + H(+). The enzyme catalyses 1,2-di-(9Z-octadecenoyl)-sn-glycero-3-phosphoethanolamine + S-adenosyl-L-methionine = 1,2-di-(9Z-octadecenoyl)-sn-glycero-3-phospho-N-methylethanolamine + S-adenosyl-L-homocysteine + H(+). It carries out the reaction 1,2-di-(9Z-octadecenoyl)-sn-glycero-3-phospho-N-methylethanolamine + S-adenosyl-L-methionine = 1,2-di-(9Z-octadecenoyl)-sn-glycero-3-phospho-N,N-dimethylethanolamine + S-adenosyl-L-homocysteine + H(+). It catalyses the reaction 1,2-di-(9Z-octadecenoyl)-sn-glycero-3-phospho-N,N-dimethylethanolamine + S-adenosyl-L-methionine = 1,2-di-(9Z-octadecenoyl)-sn-glycero-3-phosphocholine + S-adenosyl-L-homocysteine + H(+). The catalysed reaction is 1,2-di-(9Z,12Z-octadecadienoyl)-sn-glycero-3-phosphoethanolamine + S-adenosyl-L-methionine = 1,2-di-(9Z,12Z-octadecadienoyl)-sn-glycero-3-phospho-N-methylethanolamine + S-adenosyl-L-homocysteine + H(+). The enzyme catalyses 1,2-di-(9Z,12Z-octadecadienoyl)-sn-glycero-3-phospho-N-methylethanolamine + S-adenosyl-L-methionine = 1,2-di-(9Z,12Z-octadecadienoyl)-sn-glycero-3-phospho-N,N-dimethylethanolamine + S-adenosyl-L-homocysteine + H(+). It carries out the reaction 1,2-di-(9Z,12Z-octadecadienoyl)-sn-glycero-3-phospho-N,N-dimethylethanolamine + S-adenosyl-L-methionine = 1,2-di-(9Z,12Z-octadecadienoyl)-sn-glycero-3-phosphocholine + S-adenosyl-L-homocysteine + H(+). It catalyses the reaction 1,2-di-(9Z,12Z,15Z-octadecatrienoyl)-sn-glycero-3-phosphoethanolamine + S-adenosyl-L-methionine = 1,2-di-(9Z,12Z,15Z-octadecatrienoyl)-sn-glycero-3-phospho-N-methylethanolamine + S-adenosyl-L-homocysteine + H(+). The catalysed reaction is 1,2-di-(9Z,12Z,15Z-octadecatrienoyl)-sn-glycero-3-phospho-N-methylethanolamine + S-adenosyl-L-methionine = 1,2-di-(9Z,12Z,15Z-octadecatrienoyl)-sn-glycero-3-phospho-N,N-dimethylethanolamine + S-adenosyl-L-homocysteine + H(+). The enzyme catalyses 1,2-di-(9Z,12Z,15Z-octadecatrienoyl)-sn-glycero-3-phospho-N,N-dimethylethanolamine + S-adenosyl-L-methionine = 1,2-di-(9Z,12Z,15Z-octadecatrienoyl)-sn-glycero-3-phosphocholine + S-adenosyl-L-homocysteine + H(+). It carries out the reaction 1-hexadecanoyl-2-(4Z,7Z,10Z,13Z,16Z,19Z-docosahexaenoyl)-sn-glycero-3-phosphoethanolamine + S-adenosyl-L-methionine = 1-hexadecanoyl-2-(4Z,7Z,10Z,13Z,16Z,19Z-docosahexaenoyl)-sn-glycero-3-phospho-N-methylethanolamine + S-adenosyl-L-homocysteine + H(+). It catalyses the reaction 1-hexadecanoyl-2-(4Z,7Z,10Z,13Z,16Z,19Z-docosahexaenoyl)-sn-glycero-3-phospho-N-methylethanolamine + S-adenosyl-L-methionine = 1-hexadecanoyl-2-(4Z,7Z,10Z,13Z,16Z,19Z-docosahexaenoyl)-sn-glycero-3-phospho-N,N-dimethylethanolamine + S-adenosyl-L-homocysteine + H(+). The catalysed reaction is 1-hexadecanoyl-2-(4Z,7Z,10Z,13Z,16Z,19Z-docosahexaenoyl)-sn-glycero-3-phospho-N,N-dimethylethanolamine + S-adenosyl-L-methionine = 1-hexadecanoyl-2-(4Z,7Z,10Z,13Z,16Z,19Z-docosahexaenoyl)-sn-glycero-3-phosphocholine + S-adenosyl-L-homocysteine + H(+). Its pathway is phospholipid metabolism; phosphatidylcholine biosynthesis. Its function is as follows. Catalyzes the three sequential steps of the methylation pathway for the biosynthesis of phosphatidylcholine, a critical and essential component for membrane structure. Uses S-adenosylmethionine (S-adenosyl-L-methionine, SAM or AdoMet) as the methyl group donor for the methylation of phosphatidylethanolamine (1,2-diacyl-sn-glycero-3-phosphoethanolamine, PE) to phosphatidylmonomethylethanolamine (1,2-diacyl-sn-glycero-3-phospho-N-methylethanolamine, PMME), PMME to phosphatidyldimethylethanolamine (1,2-diacyl-sn-glycero-3-phospho-N,N-dimethylethanolamine, PDME), and PDME to phosphatidylcholine (1,2-diacyl-sn-glycero-3-phosphocholine, PC), producing S-adenosyl-L-homocysteine in each step. The chain is Phosphatidylethanolamine N-methyltransferase from Mus musculus (Mouse).